Reading from the N-terminus, the 219-residue chain is Orotate phosphoribosyltransferase (219 aa).

Lys-26 contacts 5-phospho-alpha-D-ribose 1-diphosphate. 34 to 35 (FF) provides a ligand contact to orotate. Residues 72–73 (YK), Arg-98, Lys-99, Lys-102, His-104, and 124–132 (DDVITAGTA) each bind 5-phospho-alpha-D-ribose 1-diphosphate. Orotate contacts are provided by Thr-128 and Arg-156.

It belongs to the purine/pyrimidine phosphoribosyltransferase family. PyrE subfamily. Homodimer. Mg(2+) serves as cofactor.

The enzyme catalyses orotidine 5'-phosphate + diphosphate = orotate + 5-phospho-alpha-D-ribose 1-diphosphate. The protein operates within pyrimidine metabolism; UMP biosynthesis via de novo pathway; UMP from orotate: step 1/2. Catalyzes the transfer of a ribosyl phosphate group from 5-phosphoribose 1-diphosphate to orotate, leading to the formation of orotidine monophosphate (OMP). The polypeptide is Orotate phosphoribosyltransferase (Stenotrophomonas maltophilia (strain K279a)).